We begin with the raw amino-acid sequence, 301 residues long: MQAGGIPGFALTFAAPAKINLALHVVGQRADGHHLLESLVTFAECGDRVGLIAADRDRFTVSGRFATDLSAEGNGGNLVLRARDLLRRELAAQGRMAGPVHLHLEKNLPIASGIGGGSADAAATLRGLLSLWGATVEAASLNSLALQLGADVPMCLDRGPLVARGIGEEITPLPDLPPFDVVLVNPLVAVSTPVIFRSLVRKTNPPLVLPEDARSTAEWLTAMAAMRNDLEPPARAHEPMIETVSNALRDAGAALVRMSGSGATCFGLFTGMKSAERAAETISAGHPRWYVQATRTAGKSG.

Residue lysine 18 is part of the active site. 109-119 lines the ATP pocket; it reads PIASGIGGGSA. The active site involves aspartate 151.

Belongs to the GHMP kinase family. IspE subfamily.

The catalysed reaction is 4-CDP-2-C-methyl-D-erythritol + ATP = 4-CDP-2-C-methyl-D-erythritol 2-phosphate + ADP + H(+). It functions in the pathway isoprenoid biosynthesis; isopentenyl diphosphate biosynthesis via DXP pathway; isopentenyl diphosphate from 1-deoxy-D-xylulose 5-phosphate: step 3/6. Its function is as follows. Catalyzes the phosphorylation of the position 2 hydroxy group of 4-diphosphocytidyl-2C-methyl-D-erythritol. The sequence is that of 4-diphosphocytidyl-2-C-methyl-D-erythritol kinase from Rhizobium meliloti (strain 1021) (Ensifer meliloti).